The following is a 477-amino-acid chain: Cytoplasmic 60S subunit biogenesis factor ZNF622 (477 aa).

Position 2 is an N-acetylalanine (Ala2). U1-type zinc fingers lie at residues 4–28 (YTCITCRVAFRDADMQRAHYKTDWH) and 67–91 (TYCTVCSKKFASFNAYENHLKSRRH). The interval 135-212 (AIKAQPSMSP…EDLDGDDWED (78 aa)) is disordered. A compositionally biased stretch (basic and acidic residues) spans 167–178 (GTHDRDPSEKPP). Residues 196–212 (EDSEEEEEDLDGDDWED) are compositionally biased toward acidic residues. At Ser276 the chain carries Phosphoserine.

Belongs to the REI1 family. In terms of assembly, homo- and heterodimer. Associates with pre-60S ribosomal particles. Interacts with MELK and MYBL2. Interacts with DNAJC21. In terms of processing, phosphorylated by MELK. The phosphorylation may redirect the protein to the nucleus. Ubiquitinated by HECTD1, leading to its degradation. As to expression, expressed in lung, kidney, spleen, liver and brain with lowest expression in kidney.

It localises to the cytoplasm. Its subcellular location is the nucleus. Its function is as follows. Pre-60S-associated cytoplasmic factor involved in the cytoplasmic maturation of the 60S subunit. In Homo sapiens (Human), this protein is Cytoplasmic 60S subunit biogenesis factor ZNF622.